Consider the following 197-residue polypeptide: Phosphoheptose isomerase (197 aa).

In terms of domain architecture, SIS spans 37-197 (MLQCLMNDGK…CIDSVLLEGM (161 aa)). 52-54 (NGG) is a binding site for substrate. Zn(2+) is bound by residues His-61 and Glu-65. Residues Glu-65, 94–95 (ND), 120–122 (STS), Ser-125, and Gln-175 contribute to the substrate site. Residues Gln-175 and His-183 each contribute to the Zn(2+) site.

This sequence belongs to the SIS family. GmhA subfamily. Homotetramer. Zn(2+) serves as cofactor.

The protein localises to the cytoplasm. It catalyses the reaction 2 D-sedoheptulose 7-phosphate = D-glycero-alpha-D-manno-heptose 7-phosphate + D-glycero-beta-D-manno-heptose 7-phosphate. The protein operates within carbohydrate biosynthesis; D-glycero-D-manno-heptose 7-phosphate biosynthesis; D-glycero-alpha-D-manno-heptose 7-phosphate and D-glycero-beta-D-manno-heptose 7-phosphate from sedoheptulose 7-phosphate: step 1/1. Catalyzes the isomerization of sedoheptulose 7-phosphate in D-glycero-D-manno-heptose 7-phosphate. The polypeptide is Phosphoheptose isomerase (Neisseria meningitidis serogroup C (strain 053442)).